Consider the following 362-residue polypeptide: tRNA 2-selenouridine synthase (362 aa).

One can recognise a Rhodanese domain in the interval 12 to 135 (FLNDTPLLDV…LRRFLIDEME (124 aa)). Residue C95 is the S-selanylcysteine intermediate of the active site.

The protein belongs to the SelU family. Monomer.

The enzyme catalyses 5-methylaminomethyl-2-thiouridine(34) in tRNA + selenophosphate + (2E)-geranyl diphosphate + H2O + H(+) = 5-methylaminomethyl-2-selenouridine(34) in tRNA + (2E)-thiogeraniol + phosphate + diphosphate. It carries out the reaction 5-methylaminomethyl-2-thiouridine(34) in tRNA + (2E)-geranyl diphosphate = 5-methylaminomethyl-S-(2E)-geranyl-thiouridine(34) in tRNA + diphosphate. It catalyses the reaction 5-methylaminomethyl-S-(2E)-geranyl-thiouridine(34) in tRNA + selenophosphate + H(+) = 5-methylaminomethyl-2-(Se-phospho)selenouridine(34) in tRNA + (2E)-thiogeraniol. The catalysed reaction is 5-methylaminomethyl-2-(Se-phospho)selenouridine(34) in tRNA + H2O = 5-methylaminomethyl-2-selenouridine(34) in tRNA + phosphate. Its function is as follows. Involved in the post-transcriptional modification of the uridine at the wobble position (U34) of tRNA(Lys), tRNA(Glu) and tRNA(Gln). Catalyzes the conversion of 2-thiouridine (S2U-RNA) to 2-selenouridine (Se2U-RNA). Acts in a two-step process involving geranylation of 2-thiouridine (S2U) to S-geranyl-2-thiouridine (geS2U) and subsequent selenation of the latter derivative to 2-selenouridine (Se2U) in the tRNA chain. This Alcanivorax borkumensis (strain ATCC 700651 / DSM 11573 / NCIMB 13689 / SK2) protein is tRNA 2-selenouridine synthase.